A 186-amino-acid chain; its full sequence is ADP-ribosylation factor-like protein 6 (186 aa).

The N-myristoyl glycine moiety is linked to residue Gly-2. Residues Gly-24 to Thr-31, Thr-50, Asp-69 to Gln-73, Gly-72, Asn-130 to Asp-133, and Ala-164 contribute to the GTP site. Positions 31 and 50 each coordinate Mg(2+).

This sequence belongs to the small GTPase superfamily. Arf family. Interacts with SEC61B, ARL6IP1, ARL6IP2, ARL6IP3, ARL6IP4 ARL6IP5 and ARL6IP6. Interacts (GTP-bound form) with the BBSome a complex that contains BBS1, BBS2, BBS4, BBS5, BBS7, BBS8/TTC8, BBS9 and BBIP10. Interacts (GTP-free form) with IFT27.

It localises to the cell projection. It is found in the cilium membrane. The protein localises to the cytoplasm. The protein resides in the cytoskeleton. Its subcellular location is the cilium axoneme. It localises to the cilium basal body. Involved in membrane protein trafficking at the base of the ciliary organelle. Mediates recruitment onto plasma membrane of the BBSome complex which would constitute a coat complex required for sorting of specific membrane proteins to the primary cilia. Together with BBS1, is necessary for correct trafficking of PKD1 to primary cilia. Together with the BBSome complex and LTZL1, controls SMO ciliary trafficking and contributes to the sonic hedgehog (SHH) pathway regulation. May regulate cilia assembly and disassembly and subsequent ciliary signaling events such as the Wnt signaling cascade. Isoform 2 may be required for proper retinal function and organization. The protein is ADP-ribosylation factor-like protein 6 (ARL6) of Homo sapiens (Human).